Reading from the N-terminus, the 129-residue chain is Small ribosomal subunit protein uS9 (129 aa).

Belongs to the universal ribosomal protein uS9 family.

The polypeptide is Small ribosomal subunit protein uS9 (Chlorobium chlorochromatii (strain CaD3)).